A 549-amino-acid polypeptide reads, in one-letter code: Lipase 1 (549 aa).

The signal sequence occupies residues 1–15; the sequence is MELALALSLIASVAA. C75 and C112 are joined by a disulfide. S224 serves as the catalytic Acyl-ester intermediate. C283 and C292 form a disulfide bridge. N329 carries an N-linked (GlcNAc...) asparagine glycan. E356 acts as the Charge relay system in catalysis. N-linked (GlcNAc...) asparagine glycosylation is present at N366. Residue H464 is the Charge relay system of the active site.

It belongs to the type-B carboxylesterase/lipase family.

The catalysed reaction is a triacylglycerol + H2O = a diacylglycerol + a fatty acid + H(+). This Diutina rugosa (Yeast) protein is Lipase 1 (LIP1).